Consider the following 222-residue polypeptide: ATP-dependent dethiobiotin synthetase BioD (222 aa).

12-17 (DVGKTF) contributes to the ATP binding site. Position 16 (T16) interacts with Mg(2+). Residue K37 is part of the active site. S41 provides a ligand contact to substrate. Residues D54 and 113–116 (EGAG) each bind ATP. Residues D54 and E113 each contribute to the Mg(2+) site.

This sequence belongs to the dethiobiotin synthetase family. As to quaternary structure, homodimer. Mg(2+) serves as cofactor.

The protein localises to the cytoplasm. It catalyses the reaction (7R,8S)-7,8-diammoniononanoate + CO2 + ATP = (4R,5S)-dethiobiotin + ADP + phosphate + 3 H(+). The protein operates within cofactor biosynthesis; biotin biosynthesis; biotin from 7,8-diaminononanoate: step 1/2. Functionally, catalyzes a mechanistically unusual reaction, the ATP-dependent insertion of CO2 between the N7 and N8 nitrogen atoms of 7,8-diaminopelargonic acid (DAPA, also called 7,8-diammoniononanoate) to form a ureido ring. The sequence is that of ATP-dependent dethiobiotin synthetase BioD from Anoxybacillus flavithermus (strain DSM 21510 / WK1).